Reading from the N-terminus, the 435-residue chain is Serine carboxypeptidase-like 14 (435 aa).

Positions 1–23 (MGSWIPKLLLLQLVLLLTKHADS) are cleaved as a signal peptide. 3 cysteine pairs are disulfide-bonded: cysteine 82–cysteine 325, cysteine 246–cysteine 260, and cysteine 284–cysteine 291. The N-linked (GlcNAc...) asparagine glycan is linked to asparagine 103. The active site involves serine 178. N-linked (GlcNAc...) asparagine glycosylation is present at asparagine 344. Aspartate 360 is a catalytic residue. N-linked (GlcNAc...) asparagine glycosylation is present at asparagine 376. Histidine 413 is an active-site residue.

Belongs to the peptidase S10 family. Expressed in senescent leaves.

It is found in the secreted. In terms of biological role, probable carboxypeptidase. The sequence is that of Serine carboxypeptidase-like 14 (SCPL14) from Arabidopsis thaliana (Mouse-ear cress).